The sequence spans 336 residues: Phosphate acyltransferase (336 aa).

This sequence belongs to the PlsX family. In terms of assembly, homodimer. Probably interacts with PlsY.

It is found in the cytoplasm. The catalysed reaction is a fatty acyl-[ACP] + phosphate = an acyl phosphate + holo-[ACP]. The protein operates within lipid metabolism; phospholipid metabolism. Functionally, catalyzes the reversible formation of acyl-phosphate (acyl-PO(4)) from acyl-[acyl-carrier-protein] (acyl-ACP). This enzyme utilizes acyl-ACP as fatty acyl donor, but not acyl-CoA. This is Phosphate acyltransferase from Dictyoglomus thermophilum (strain ATCC 35947 / DSM 3960 / H-6-12).